A 620-amino-acid chain; its full sequence is MALLQIAEPGQSAAPHQHRLAVGIDLGTTNSLVAAVRSGETATLPDELGQHSLPSIVRYTQDSVEVGALAALSSAQDPQNTIVSVKRFMGRSLADIKAGEQSFPYEFAESENGLPLFVTPQGQVNPVQVSAEILRPLIARAEKTLGGELQGVVITVPAYFDDAQRQGTKDAAALLGVKVLRLLNEPTAAAIAYGLDSKQEGVIAIYDLGGGTFDISILRLNRGVFEVLATGGDSALGGDDFDHLLQAHMQQVWQLSDIDSQLSRQLLIESRRVKEALTDAAETEAKVILADGTELTQIVSKAEFDAMIAALVKKTIASCRRTLRDAGVTTDEVLETVMVGGSTRVPLVREQVEAFFGKPPLTSIDPDRVVAIGAAIQADILVGNKPESDLLLLDVIPLSLGIETMGGLVEKVVSRNTTIPVARAQEFTTFKDGQTAMAFHVVQGERELVADCRSLARFTLKGIPPLAAGAAHIRVTFQVDADGLLSVTAMEKSTGVQSSIQVKPSFGLSDTEIATMLKDSMKYAKDDIGRRMLAEQQVEAARVLESLHAALAKDGDLLNADERGQIDATMVNVAQVAAGDDADAIKLAIEKLDEQTQDFAARRMDNSIRVAFKGQSIDNI.

Belongs to the heat shock protein 70 family.

In terms of biological role, chaperone involved in the maturation of iron-sulfur cluster-containing proteins. Has a low intrinsic ATPase activity which is markedly stimulated by HscB. In Shewanella baltica (strain OS155 / ATCC BAA-1091), this protein is Chaperone protein HscA homolog.